The chain runs to 352 residues: Peptide chain release factor 1 (352 aa).

Glutamine 233 bears the N5-methylglutamine mark. The tract at residues 288 to 309 is disordered; the sequence is NAKDRKEQVGSGDRSERIRTYN. The segment covering 289-306 has biased composition (basic and acidic residues); that stretch reads AKDRKEQVGSGDRSERIR.

Belongs to the prokaryotic/mitochondrial release factor family. In terms of processing, methylated by PrmC. Methylation increases the termination efficiency of RF1.

It is found in the cytoplasm. Peptide chain release factor 1 directs the termination of translation in response to the peptide chain termination codons UAG and UAA. The protein is Peptide chain release factor 1 of Helicobacter pylori (strain Shi470).